We begin with the raw amino-acid sequence, 248 residues long: Zinc finger CCCH domain-containing protein 36 (248 aa).

Disordered stretches follow at residues 1–37 (MDTR…GLGS) and 87–110 (MQGS…VSNF). Residues 36 to 64 (GSKSKPCTKFFSTSGCPFGENCHFLHYVP) form a C3H1-type 1 zinc finger. The span at 90 to 103 (SGNGGRFSGRGESG) shows a compositional bias: gly residues. A KH domain is found at 113 to 177 (SATARFSVDA…EQISEASAMV (65 aa)). A disordered region spans residues 188–209 (AKKPPGGGLGGGGGMGSEGKPH). Positions 192–204 (PGGGLGGGGGMGS) are enriched in gly residues. A C3H1-type 2 zinc finger spans residues 213–240 (NFKTKICERFSKGNCTFGDRCHFAHGEA).

This Arabidopsis thaliana (Mouse-ear cress) protein is Zinc finger CCCH domain-containing protein 36.